A 448-amino-acid polypeptide reads, in one-letter code: Glutamyl-tRNA reductase (448 aa).

Substrate contacts are provided by residues 49–52 (TCNR), Ser109, 114–116 (ETQ), and Gln120. The active-site Nucleophile is the Cys50. Residue 189–194 (GAGEMS) coordinates NADP(+).

This sequence belongs to the glutamyl-tRNA reductase family. Homodimer.

It catalyses the reaction (S)-4-amino-5-oxopentanoate + tRNA(Glu) + NADP(+) = L-glutamyl-tRNA(Glu) + NADPH + H(+). The protein operates within porphyrin-containing compound metabolism; protoporphyrin-IX biosynthesis; 5-aminolevulinate from L-glutamyl-tRNA(Glu): step 1/2. Functionally, catalyzes the NADPH-dependent reduction of glutamyl-tRNA(Glu) to glutamate 1-semialdehyde (GSA). The protein is Glutamyl-tRNA reductase of Staphylococcus aureus (strain MRSA252).